We begin with the raw amino-acid sequence, 313 residues long: Protein OPG185 (313 aa).

The first 16 residues, 1-16 (MTQLPILLLLISLVYA), serve as a signal peptide directing secretion. At 17–274 (TPSPQTSKKI…TSISNYKTKD (258 aa)) the chain is on the virion surface side. Residues Asn-37, Asn-69, Asn-112, Asn-159, Asn-194, and Asn-252 are each glycosylated (N-linked (GlcNAc...) asparagine; by host). The helical transmembrane segment at 275 to 295 (FVEIFGITTLIILSAVAIFCI) threads the bilayer. Topologically, residues 296–313 (TYYICNKHPRKYKTENKV) are intravirion.

It belongs to the orthopoxvirus OPG185 family. Heterodimerizes with OPG040. The heterodimer OPG185-OPG040 interacts with components of the entry fusion complex OPG143 and OPG094. Heterodimer with C3/VPC protein; disulfide-linked. Glycosylated; contains phosphate and sulfate-substituted glycans. O-glycosylation is required for hemagglutination and hemadsorption activities of infected cell membranes.

It localises to the virion membrane. It is found in the host membrane. Functionally, prevents cell to cell fusion by interacting with and directing the viral OPG040 protein on the host plasma membrane. The OPG185-OPG040 complex associates with components of the entry fusion complex (EFC) presumably to avoid superinfection and syncytium formation. Via its interaction with C3/VCP protein, protects the infected cell and probably also the extracellular enveloped virus from complement attack. This Monkeypox virus protein is Protein OPG185 (OPG185).